Reading from the N-terminus, the 316-residue chain is Ribosomal RNA small subunit methyltransferase H (316 aa).

S-adenosyl-L-methionine-binding positions include 35–37 (GGH), Asp55, Phe79, Asp101, and Gln108. A disordered region spans residues 291–316 (AIKPSKDEVDENTRSRSSVLRIAEKL). Basic and acidic residues predominate over residues 294-304 (PSKDEVDENTR).

It belongs to the methyltransferase superfamily. RsmH family.

Its subcellular location is the cytoplasm. The catalysed reaction is cytidine(1402) in 16S rRNA + S-adenosyl-L-methionine = N(4)-methylcytidine(1402) in 16S rRNA + S-adenosyl-L-homocysteine + H(+). Its function is as follows. Specifically methylates the N4 position of cytidine in position 1402 (C1402) of 16S rRNA. The sequence is that of Ribosomal RNA small subunit methyltransferase H from Vibrio atlanticus (strain LGP32) (Vibrio splendidus (strain Mel32)).